The primary structure comprises 2842 residues: Adenomatous polyposis coli protein (2842 aa).

Residue Ala-2 is modified to N-acetylalanine. Residues 2 to 62 are a coiled coil; it reads AAASYDQLLK…GSIEDETMTS (61 aa). Residues Ser-105 and Ser-109 each carry the phosphoserine modification. Residues 125–260 adopt a coiled-coil conformation; it reads SRESTGYLEE…ASHEAERQLE (136 aa). Residues 238-304 form a disordered region; the sequence is AEAERSSQSK…THSAPRRLTS (67 aa). Positions 239–259 are enriched in basic and acidic residues; that stretch reads EAERSSQSKHETASHEAERQL. Positions 268 to 279 are enriched in polar residues; that stretch reads NLATSGSGQSSA. ARM repeat units follow at residues 451–493, 503–545, 546–589, 590–636, 637–681, 682–723, and 724–765; these read LMKL…HYSV, LTNL…IASV, LRNL…VLSA, LWNL…GGGI, LRNV…ACGT, LWNL…SAAA, and LRNL…LDAQ. Phosphoserine is present on residues Ser-742, Ser-746, and Ser-778. Positions 828–877 are disordered; sequence VLPSSSSSRGSLDSSRSEKDRSLERERGIGLSTYHSATENPGTSSKRGLQ. Residues 831–841 show a composition bias toward low complexity; it reads SSSSSRGSLDS. Basic and acidic residues predominate over residues 842–855; it reads SRSEKDRSLERERG. Residues 860–877 are compositionally biased toward polar residues; that stretch reads TYHSATENPGTSSKRGLQ. At Ser-906 the chain carries Phosphoserine. Disordered regions lie at residues 921-942 and 956-988; these read RRSSASHTHPNTHNFAKSESSN and RSSNDSLNSVTSSDGYGKRGQMKPSVESYSEDD. The segment covering 931–942 has biased composition (polar residues); that stretch reads NTHNFAKSESSN. The segment covering 959 to 969 has biased composition (low complexity); the sequence is NDSLNSVTSSD. Residues Ser-985, Ser-1036, and Ser-1040 each carry the phosphoserine modification. The interval 1018–1167 is interaction with catenins; sequence ELDTPINYSL…TNYSIKYNEE (150 aa). 4 disordered regions span residues 1058 to 1078, 1092 to 1166, 1188 to 1249, and 1306 to 1373; these read IKQNEQRQSRSQNTNFPVYSE, GQQE…KYNE, SQKP…CKVP, and ENDV…PEHY. Polar residues-rich tracts occupy residues 1066 to 1078 and 1103 to 1128; these read SRSQNTNFPVYSE and RGTNGSETNRMGSSHAVNQNVNQSLC. Positions 1144 to 1157 are enriched in basic and acidic residues; sequence RYSEEEQHEEEERP. Low complexity-rich tracts occupy residues 1188-1200 and 1209-1223; these read SQKPSFSFSKTPS and NSPSSEAASAPSSNA. Composition is skewed to polar residues over residues 1224–1242 and 1323–1340; these read KRQSQLHPSSAQRNGQTPK and VSQSTRTKPSRLQASGLA. The span at 1352-1363 shows a compositional bias: low complexity; sequence SSGAKSPSKSGA. Residues Ser-1357, Ser-1368, Ser-1382, Ser-1389, and Ser-1392 each carry the phosphoserine modification. 4 disordered regions span residues 1398-1474, 1525-1568, 1584-1609, and 1661-1711; these read IASS…VSAA, PPVQ…SDDD, KSSRKAKKLAQTASKLPPPVARKPSQ, and ESPP…IPDL. Position 1435 is a phosphothreonine (Thr-1435). Residues 1435–1444 show a composition bias toward pro residues; the sequence is TPPPPPPPQP. Over residues 1532–1546 the composition is skewed to acidic residues; that stretch reads NGNETEPEQPEESNE. The span at 1547–1562 shows a compositional bias: basic and acidic residues; it reads NQDKEVEKPDSEKDLL. Ser-1565 carries the phosphoserine modification. Over residues 1681-1700 the composition is skewed to basic and acidic residues; the sequence is EFEKRDTIPTEGRSTDEAQR. Ser-1714 is modified (phosphoserine). The segment covering 1748–1762 has biased composition (polar residues); it reads VQQASMTSSGTNKNQ. Disordered regions lie at residues 1748–1950, 1963–2010, and 2043–2067; these read VQQA…EKLQ, RNSS…APKS, and SSAMPKKRRPSRLKGEGEWQSPRKV. At Ser-1772 the chain carries Phosphoserine. 2 stretches are compositionally biased toward basic and acidic residues: residues 1783–1792 and 1804–1833; these read YRTRVRKNTD and SDNKDSKKQSLKNNPKDLNDKLPDNEDRVR. Ser-1859, Ser-1861, and Ser-1862 each carry phosphoserine. A highly charged region spans residues 1864–1891; that stretch reads DFDDDDVDLSREKAELRKGKESKDSEAK. Positions 1871–1894 are enriched in basic and acidic residues; that stretch reads DLSREKAELRKGKESKDSEAKVTC. The segment covering 1899 to 1911 has biased composition (low complexity); that stretch reads SSSQQSARKAQAS. A compositionally biased stretch (polar residues) spans 1927–1936; the sequence is EQPTFPQSSK. The span at 1937–1949 shows a compositional bias: basic and acidic residues; it reads DVPDRGAATDEKL. A phosphoserine mark is found at Ser-1969 and Ser-1971. An interaction with AXIN1 region spans residues 2034–2058; sequence EDDLLRECISSAMPKKRRPSRLKGE. A phosphoserine mark is found at Ser-2087, Ser-2092, Ser-2125, Ser-2129, Ser-2130, and Ser-2132. Disordered stretches follow at residues 2148-2173, 2234-2641, and 2664-2842; these read FHLTPDQEEKPFTSHKGPRILKPGEK, PGVR…AESK, and CPIN…VTSV. A Phosphothreonine modification is found at Thr-2151. The segment at 2167–2674 is basic region; the sequence is ILKPGEKSTL…PINNPRSGRS (508 aa). 2 stretches are compositionally biased toward polar residues: residues 2257–2272 and 2283–2347; these read ASKSPSEGPVATTSPR and SPIT…QLPR. A phosphoserine mark is found at Ser-2260, Ser-2270, and Ser-2283. Over residues 2348 to 2369 the composition is skewed to low complexity; sequence TSSPSTASTKSSGSGKMSYTSP. 2 stretches are compositionally biased toward polar residues: residues 2370-2411 and 2418-2427; these read GRQL…NGSN and RMSSTKSSGS. Positions 2459-2477 are enriched in low complexity; the sequence is SASFESLSPSSRPDSPTRS. Phosphoserine is present on residues Ser-2473 and Ser-2535. An interaction with DLG1 region spans residues 2475–2842; it reads TRSQAQTPVL…HSGSYLVTSV (368 aa). Residues 2518 to 2535 show a composition bias toward basic and acidic residues; sequence SDGRPSKRHDIARSHSES. Over residues 2555 to 2568 the composition is skewed to polar residues; the sequence is SSSLPRVSTWRRTG. Ser-2569 is subject to Phosphoserine. Positions 2569-2579 are enriched in low complexity; that stretch reads SSSSILSASSE. Residues 2580-2592 show a composition bias toward basic and acidic residues; that stretch reads SSEKAKSEDEKHV. The span at 2629–2638 shows a compositional bias: low complexity; it reads TTSSGAASGA. Composition is skewed to polar residues over residues 2668–2679 and 2702–2713; these read NPRSGRSPTGNT and GKQSVGSGSPVQ. Phosphoserine occurs at positions 2671 and 2674. The interaction with MAPRE1 stretch occupies residues 2674–2842; the sequence is SPTGNTPPVI…HSGSYLVTSV (169 aa). Phosphothreonine is present on Thr-2679. Phosphoserine is present on residues Ser-2710 and Ser-2723. The segment covering 2762–2773 has biased composition (low complexity); the sequence is SSSSSSKHSSPS. Over residues 2783–2809 the composition is skewed to polar residues; the sequence is FNYNPSPRKSSADSTSARPSQIPTPVG. Ser-2788 is modified (phosphoserine). The short motif at 2802–2805 is the Microtubule tip localization signal element; sequence SQIP. The short motif at 2840–2842 is the PDZ-binding element; it reads TSV.

The protein belongs to the adenomatous polyposis coli (APC) family. In terms of assembly, forms homooligomers. Found in a complex consisting of ARHGEF4, APC and CTNNB1. Found in a complex composed of MACF1, APC, AXIN1, CTNNB1 and GSK3B. The complex composed, at least, of APC, CTNNB1 and GSK3B interacts with JPT1; the interaction requires the inactive form of GSK3B (phosphorylated at 'Ser-9'). Interacts with APC2. Interacts with DLG1 (via PDZ domains) and DLG3 (via PDZ domains). Interacts with alpha- and beta-catenins. Interacts with AXIN1 (via RGS domain). Interacts with ARHGEF4 (via N-terminus). Interacts (via C-terminal residues 2674-2843) with MAPRE1 (via C-terminal residues 206-211); the interaction inhibits association with and bundling of F-actin. Interacts with MAPRE2 and MAPRE3 (via C-terminus). Interacts with DIAPH1; DIAPH1 acts as a scaffold protein for MAPRE1 and APC to stabilize microtubules and promote cell migration. Interacts with DIAPH2. Interacts with SCRIB; may mediate APC targeting to adherens junctions of epithelial cells. Interacts with SPATA13 (via N-terminus and SH3 domain). Interacts with ASAP1 (via SH3 domain). Interacts (at the cell membrane) with AMER1 and AMER2 (via ARM repeats). Interacts with KHDRBS1. Interacts with actin; binds both to F-actin and actin filament bundles. In terms of processing, phosphorylated; phosphorylation enhances the F-actin bundling activity. Phosphorylated by GSK3B. Post-translationally, ubiquitinated, leading to its degradation by the proteasome. Ubiquitination is facilitated by Axin. Deubiquitinated by ZRANB1/TRABID.

Its subcellular location is the cell junction. It is found in the adherens junction. The protein resides in the cytoplasm. The protein localises to the cytoskeleton. It localises to the cell projection. Its subcellular location is the lamellipodium. It is found in the ruffle membrane. The protein resides in the cell membrane. Its function is as follows. Tumor suppressor. Promotes rapid degradation of CTNNB1 and participates in Wnt signaling as a negative regulator. APC activity is correlated with its phosphorylation state. Activates the GEF activity of SPATA13 and ARHGEF4. Plays a role in hepatocyte growth factor (HGF)-induced cell migration. Required for MMP9 up-regulation via the JNK signaling pathway in colorectal tumor cells. Associates with both microtubules and actin filaments, components of the cytoskeleton. Plays a role in mediating the organization of F-actin into ordered bundles. Functions downstream of Rho GTPases and DIAPH1 to selectively stabilize microtubules. Acts as a mediator of ERBB2-dependent stabilization of microtubules at the cell cortex. It is required for the localization of MACF1 to the cell membrane and this localization of MACF1 is critical for its function in microtubule stabilization. The protein is Adenomatous polyposis coli protein (Apc) of Rattus norvegicus (Rat).